Here is a 288-residue protein sequence, read N- to C-terminus: Glycine--tRNA ligase alpha subunit (288 aa).

Belongs to the class-II aminoacyl-tRNA synthetase family. In terms of assembly, tetramer of two alpha and two beta subunits.

It localises to the cytoplasm. The catalysed reaction is tRNA(Gly) + glycine + ATP = glycyl-tRNA(Gly) + AMP + diphosphate. The chain is Glycine--tRNA ligase alpha subunit from Rickettsia africae (strain ESF-5).